The following is a 292-amino-acid chain: tRNA pseudouridine synthase B (292 aa).

Residue Asp-38 is the Nucleophile of the active site.

Belongs to the pseudouridine synthase TruB family. Type 1 subfamily.

The catalysed reaction is uridine(55) in tRNA = pseudouridine(55) in tRNA. Responsible for synthesis of pseudouridine from uracil-55 in the psi GC loop of transfer RNAs. This is tRNA pseudouridine synthase B from Streptococcus gordonii (strain Challis / ATCC 35105 / BCRC 15272 / CH1 / DL1 / V288).